Here is a 203-residue protein sequence, read N- to C-terminus: Inosine triphosphate pyrophosphatase (203 aa).

10 to 15 (TGNQNK) contacts ITP. Residue Glu-40 participates in Mg(2+) binding. Residues Lys-52, 68–69 (DT), Lys-85, 145–148 (FGWD), Lys-168, and 173–174 (HR) contribute to the ITP site.

This sequence belongs to the HAM1 NTPase family. In terms of assembly, homodimer. The cofactor is Mg(2+). It depends on Mn(2+) as a cofactor.

Its subcellular location is the cytoplasm. The enzyme catalyses ITP + H2O = IMP + diphosphate + H(+). It catalyses the reaction dITP + H2O = dIMP + diphosphate + H(+). The catalysed reaction is XTP + H2O = XMP + diphosphate + H(+). Pyrophosphatase that hydrolyzes non-canonical purine nucleotides such as inosine triphosphate (ITP), deoxyinosine triphosphate (dITP) or xanthosine 5'-triphosphate (XTP) to their respective monophosphate derivatives. The enzyme does not distinguish between the deoxy- and ribose forms. Probably excludes non-canonical purines from RNA and DNA precursor pools, thus preventing their incorporation into RNA and DNA and avoiding chromosomal lesions. In Nematostella vectensis (Starlet sea anemone), this protein is Inosine triphosphate pyrophosphatase.